A 2049-amino-acid polypeptide reads, in one-letter code: Kinetochore-associated protein rod-1 (2049 aa).

In terms of assembly, component of the RZZ complex composed of rod-1, czw-1 and zwl-1. Interacts (via N-terminus) with NDC80 complex component ndc-80.

It is found in the chromosome. It localises to the centromere. Its subcellular location is the kinetochore. The protein resides in the cytoplasm. The protein localises to the cytoskeleton. It is found in the spindle. In terms of biological role, essential component of the mitotic checkpoint, which prevents cells from prematurely exiting mitosis. Required for chromosome segregation, the assembly of the dynein-dynactin and mdf-1-mdf-2 complexes onto kinetochores and spindle pole separation. Plays a role in nuclear envelope breakdown. Its function related to the spindle assembly machinery and kinetochore-microtubule attachments likely depends on its association in the mitotic RZZ complex. The RZZ complex recruits the spindly-like protein spdl-1 to kinetochores. To prevent irregular chromosome segregation, the complex also inhibits the attachment of the kinetochore-associated NDC80 complex to microtubules. The recruitment of spdl-1 to kinetochores relieves this inhibition. Required for embryonic development. This Caenorhabditis elegans protein is Kinetochore-associated protein rod-1.